A 536-amino-acid polypeptide reads, in one-letter code: Bifunctional purine biosynthesis protein PurH (536 aa).

The MGS-like domain maps to 8–158; that stretch reads IPAPDEVRIQ…KNHAYVTIVT (151 aa).

It belongs to the PurH family.

It carries out the reaction (6R)-10-formyltetrahydrofolate + 5-amino-1-(5-phospho-beta-D-ribosyl)imidazole-4-carboxamide = 5-formamido-1-(5-phospho-D-ribosyl)imidazole-4-carboxamide + (6S)-5,6,7,8-tetrahydrofolate. The enzyme catalyses IMP + H2O = 5-formamido-1-(5-phospho-D-ribosyl)imidazole-4-carboxamide. It functions in the pathway purine metabolism; IMP biosynthesis via de novo pathway; 5-formamido-1-(5-phospho-D-ribosyl)imidazole-4-carboxamide from 5-amino-1-(5-phospho-D-ribosyl)imidazole-4-carboxamide (10-formyl THF route): step 1/1. The protein operates within purine metabolism; IMP biosynthesis via de novo pathway; IMP from 5-formamido-1-(5-phospho-D-ribosyl)imidazole-4-carboxamide: step 1/1. The protein is Bifunctional purine biosynthesis protein PurH of Sinorhizobium fredii (strain NBRC 101917 / NGR234).